The following is a 108-amino-acid chain: MLKGNLAGLMKQAQQMQENMRKMQEQLAQIEVEGQSGAGLVKVTMTCRNEVRRVSIDPSLLADDKDMLEDLVAAAFNDAVRKAEATSQEKMSGMTSGLPLPPGFKLPF.

Residues 84–108 (EATSQEKMSGMTSGLPLPPGFKLPF) form a disordered region. Polar residues predominate over residues 85-95 (ATSQEKMSGMT). Pro residues predominate over residues 99 to 108 (PLPPGFKLPF).

This sequence belongs to the YbaB/EbfC family. As to quaternary structure, homodimer.

It is found in the cytoplasm. The protein resides in the nucleoid. In terms of biological role, binds to DNA and alters its conformation. May be involved in regulation of gene expression, nucleoid organization and DNA protection. In Burkholderia multivorans (strain ATCC 17616 / 249), this protein is Nucleoid-associated protein Bmul_1447/BMULJ_01796.